The sequence spans 329 residues: Ribosomal protein L11 methyltransferase (329 aa).

S-adenosyl-L-methionine contacts are provided by Thr177, Gly198, Asp220, and Asn264.

Belongs to the methyltransferase superfamily. PrmA family.

The protein localises to the cytoplasm. It catalyses the reaction L-lysyl-[protein] + 3 S-adenosyl-L-methionine = N(6),N(6),N(6)-trimethyl-L-lysyl-[protein] + 3 S-adenosyl-L-homocysteine + 3 H(+). In terms of biological role, methylates ribosomal protein L11. This is Ribosomal protein L11 methyltransferase from Helicobacter acinonychis (strain Sheeba).